Consider the following 142-residue polypeptide: Hemoglobin subunit alpha (142 aa).

The region spanning 2–142 (VLSANDKSNV…VGNVLTSKYR (141 aa)) is the Globin domain. His-59 contacts O2. His-88 is a heme b binding site.

This sequence belongs to the globin family. In terms of assembly, heterotetramer of two alpha chains and two beta chains. As to expression, red blood cells.

Its function is as follows. Involved in oxygen transport from the lung to the various peripheral tissues. In Aptenodytes forsteri (Emperor penguin), this protein is Hemoglobin subunit alpha (HBA).